The following is a 65-amino-acid chain: Antitoxin VapB32 (65 aa).

The tract at residues 46–65 is disordered; it reads ALGGTDPQATAAPRRRTSPR.

In terms of biological role, antitoxin component of a type II toxin-antitoxin (TA) system. In Mycobacterium tuberculosis (strain CDC 1551 / Oshkosh), this protein is Antitoxin VapB32 (vapB32).